The following is a 265-amino-acid chain: Apolipoprotein A-I (265 aa).

A signal peptide spans 1-20; the sequence is METKAVVLTLAVLFLTGSQA. Tandem repeats lie at residues 69 to 90 and 91 to 112. The tract at residues 69–265 is 10 X approximate tandem repeats; it reads LKILDNWDTL…DEATKKLNSQ (197 aa). The 3; half-length repeat unit spans residues 113–123; it reads KDLEELKQKVQ. 5 tandem repeats follow at residues 124 to 145, 146 to 167, 168 to 189, 190 to 209, and 210 to 230. At M195 the chain carries Methionine sulfoxide. The stretch at 231 to 241 is one 9; half-length repeat; sequence PALEDFRQGLM. Methionine sulfoxide is present on M241. The stretch at 242–265 is repeat 10; that stretch reads PVLEGFQKSVLAALDEATKKLNSQ.

It belongs to the apolipoprotein A1/A4/E family. As to quaternary structure, homodimer. Interacts with APOA1BP and CLU. Component of a sperm activating protein complex (SPAP), consisting of APOA1, an immunoglobulin heavy chain, an immunoglobulin light chain and albumin. Interacts with NDRG1. Interacts with SCGB3A2. Interacts with NAXE and YJEFN3. Post-translationally, glycosylated. Palmitoylated. In terms of processing, phosphorylation sites are present in the extracellular medium. Major protein of plasma HDL, also found in chylomicrons.

Its subcellular location is the secreted. Participates in the reverse transport of cholesterol from tissues to the liver for excretion by promoting cholesterol efflux from tissues and by acting as a cofactor for the lecithin cholesterol acyltransferase (LCAT). As part of the SPAP complex, activates spermatozoa motility. The sequence is that of Apolipoprotein A-I (APOA1) from Orycteropus afer (Aardvark).